The sequence spans 279 residues: Eukaryotic translation initiation factor 3 subunit G (279 aa).

Disordered stretches follow at residues 1 to 26, 66 to 115, and 152 to 171; these read MSTG…IANP, RKNW…KAHE, and TPSG…AAGA. Phosphoserine is present on Ser-78. The span at 102–115 shows a compositional bias: basic and acidic residues; that stretch reads KQDEKKEEEDKAHE. The span at 152-163 shows a compositional bias: low complexity; that stretch reads TPSGTTPEPTSE. The 80-residue stretch at 197–276 folds into the RRM domain; it reads TTLKVSQLNS…LILHLEWSKK (80 aa).

This sequence belongs to the eIF-3 subunit G family. Component of the eukaryotic translation initiation factor 3 (eIF-3) complex.

It localises to the cytoplasm. Its function is as follows. RNA-binding component of the eukaryotic translation initiation factor 3 (eIF-3) complex, which is involved in protein synthesis of a specialized repertoire of mRNAs and, together with other initiation factors, stimulates binding of mRNA and methionyl-tRNAi to the 40S ribosome. The eIF-3 complex specifically targets and initiates translation of a subset of mRNAs involved in cell proliferation. This subunit can bind 18S rRNA. In Candida albicans (strain SC5314 / ATCC MYA-2876) (Yeast), this protein is Eukaryotic translation initiation factor 3 subunit G.